The chain runs to 140 residues: Truncated tyrosine phosphatase D1 (140 aa).

The 140-residue stretch at 1 to 140 (MRRPNCIAEI…SAQWIQFLKK (140 aa)) folds into the Tyrosine-protein phosphatase domain.

This sequence belongs to the protein-tyrosine phosphatase family.

This chain is Truncated tyrosine phosphatase D1 (D1), found in Microplitis demolitor bracovirus (isolate Webb) (MdBV).